Consider the following 205-residue polypeptide: Glycerol-3-phosphate acyltransferase (205 aa).

The next 6 helical transmembrane spans lie at 7 to 27 (MTALVLAGYLSGSLLGAVWVC), 54 to 74 (VVPAALTLGVDAAKAMPVLWV), 80 to 100 (LPIWAQGAVGLSVLVGHSYPL), 116 to 136 (VLLMIATPVAWVCALCWALLA), 141 to 161 (TAAVASLAAALLAPLASYWLA), and 163 to 183 (EATLVVSVFSALVLVRHAWNI).

This sequence belongs to the PlsY family. As to quaternary structure, probably interacts with PlsX.

Its subcellular location is the cell inner membrane. The enzyme catalyses an acyl phosphate + sn-glycerol 3-phosphate = a 1-acyl-sn-glycero-3-phosphate + phosphate. Its pathway is lipid metabolism; phospholipid metabolism. Functionally, catalyzes the transfer of an acyl group from acyl-phosphate (acyl-PO(4)) to glycerol-3-phosphate (G3P) to form lysophosphatidic acid (LPA). This enzyme utilizes acyl-phosphate as fatty acyl donor, but not acyl-CoA or acyl-ACP. The protein is Glycerol-3-phosphate acyltransferase of Chromohalobacter salexigens (strain ATCC BAA-138 / DSM 3043 / CIP 106854 / NCIMB 13768 / 1H11).